A 139-amino-acid chain; its full sequence is 10 kDa chaperonin 2, chloroplastic (139 aa).

The N-terminal 39 residues, 1 to 39 (MASTFVCSLPNPFFAFPVKATTPSTANHTLLGSRRGCLR), are a transit peptide targeting the chloroplast. Residues 51-138 (KVVPQADRVL…CKESDLLALV (88 aa)) are cpn-10 domain.

Belongs to the GroES chaperonin family. As to expression, expressed in leaves and stems. Expressed at low levels in germinating seeds, seedlings, rosettes leaves, flowers and siliques.

The protein localises to the plastid. Its subcellular location is the chloroplast stroma. In terms of biological role, functions as a co-chaperone for protein folding in chloroplasts. The polypeptide is 10 kDa chaperonin 2, chloroplastic (Arabidopsis thaliana (Mouse-ear cress)).